A 318-amino-acid polypeptide reads, in one-letter code: Vomeronasal type-1 receptor 45 (318 aa).

Residues 1–32 (MSEILFFSPQPLFSHMMNKNSRLHTHSNIKNT) lie on the Extracellular side of the membrane. A helical transmembrane segment spans residues 33 to 53 (FFSEIGIGILGNSFLLLFHIL). The Cytoplasmic segment spans residues 54-65 (KFIRGHRLRLTD). A helical transmembrane segment spans residues 66–86 (LPIGLLSLIHLLMLLLMAFIA). Residues 87 to 109 (TDIFISRRGWDDIICKFLVYLYR) lie on the Extracellular side of the membrane. Cys-101 and Cys-188 form a disulfide bridge. A helical membrane pass occupies residues 110 to 130 (VLRGLSLCTTSMLSVLQAIIL). The Cytoplasmic segment spans residues 131 to 150 (SPRSSCLAKLKHKYPHHISC). A helical membrane pass occupies residues 151–171 (AIIFLSVLYMLISSHILLSII). The Extracellular segment spans residues 172–206 (ATPNLTRNDFLYVTQSCSILPLSYVMQSMYSTLLA). Asn-175 is a glycosylation site (N-linked (GlcNAc...) asparagine). A helical transmembrane segment spans residues 207–227 (LREVFLISLMVLSTLYMVVLL). The Cytoplasmic segment spans residues 228–254 (CRHRKQAQHLQGTSLSPKASAEQRATQ). Residues 255 to 275 (TILMLMTFFVLMSIFDSIVSC) form a helical membrane-spanning segment. Over 276 to 285 (SRTMFLDDPT) the chain is Extracellular. A helical transmembrane segment spans residues 286 to 306 (SYSIHIFVMHIYATVSPFVFM). Residues 307 to 318 (STEKHIVNILRG) lie on the Cytoplasmic side of the membrane.

The protein belongs to the G-protein coupled receptor 1 family. Expressed in a subset of sensory neurons located in the apical layer of the vomeronasal organ.

It is found in the cell membrane. Putative pheromone receptor implicated in the regulation of social and reproductive behavior. This Mus musculus (Mouse) protein is Vomeronasal type-1 receptor 45 (Vmn1r45).